The following is a 232-amino-acid chain: Cytidylate kinase (232 aa).

Residue 19 to 27 (GPAGVGKTT) participates in ATP binding.

This sequence belongs to the cytidylate kinase family. Type 1 subfamily.

The protein resides in the cytoplasm. The catalysed reaction is CMP + ATP = CDP + ADP. It catalyses the reaction dCMP + ATP = dCDP + ADP. This is Cytidylate kinase from Nitratidesulfovibrio vulgaris (strain ATCC 29579 / DSM 644 / CCUG 34227 / NCIMB 8303 / VKM B-1760 / Hildenborough) (Desulfovibrio vulgaris).